Consider the following 125-residue polypeptide: Fluoride-specific ion channel FluC (125 aa).

The next 4 helical transmembrane spans lie at 3-23, 33-53, 65-85, and 99-119; these read FILI…VSKV, IPLG…FVLF, FVLF…TFAY, and LVYF…GMVL. Residues glycine 75 and threonine 78 each coordinate Na(+).

It belongs to the fluoride channel Fluc/FEX (TC 1.A.43) family.

Its subcellular location is the cell inner membrane. It carries out the reaction fluoride(in) = fluoride(out). Na(+) is not transported, but it plays an essential structural role and its presence is essential for fluoride channel function. Functionally, fluoride-specific ion channel. Important for reducing fluoride concentration in the cell, thus reducing its toxicity. In Thermosipho melanesiensis (strain DSM 12029 / CIP 104789 / BI429), this protein is Fluoride-specific ion channel FluC.